An 832-amino-acid polypeptide reads, in one-letter code: Protein P (832 aa).

The terminal protein domain (TP) stretch occupies residues Met-1–Gln-177. Residues Glu-178–Leu-335 are spacer. Residues Ser-198–Cys-264 form a disordered region. The segment at Glu-336 to Gln-679 is polymerase/reverse transcriptase domain (RT). In terms of domain architecture, Reverse transcriptase spans Glu-346–Ile-589. Asp-418, Asp-540, and Asp-541 together coordinate Mg(2+).

It belongs to the hepadnaviridae P protein family.

The catalysed reaction is DNA(n) + a 2'-deoxyribonucleoside 5'-triphosphate = DNA(n+1) + diphosphate. The enzyme catalyses Endonucleolytic cleavage to 5'-phosphomonoester.. Its activity is regulated as follows. Activated by host HSP70 and HSP40 in vitro to be able to bind the epsilon loop of the pgRNA. Because deletion of the RNase H region renders the protein partly chaperone-independent, the chaperones may be needed indirectly to relieve occlusion of the RNA-binding site by this domain. Inhibited by several reverse-transcriptase inhibitors: Lamivudine, Adefovir and Entecavir. Multifunctional enzyme that converts the viral RNA genome into dsDNA in viral cytoplasmic capsids. This enzyme displays a DNA polymerase activity that can copy either DNA or RNA templates, and a ribonuclease H (RNase H) activity that cleaves the RNA strand of RNA-DNA heteroduplexes in a partially processive 3'- to 5'-endonucleasic mode. Neo-synthesized pregenomic RNA (pgRNA) are encapsidated together with the P protein, and reverse-transcribed inside the nucleocapsid. Initiation of reverse-transcription occurs first by binding the epsilon loop on the pgRNA genome, and is initiated by protein priming, thereby the 5'-end of (-)DNA is covalently linked to P protein. Partial (+)DNA is synthesized from the (-)DNA template and generates the relaxed circular DNA (RC-DNA) genome. After budding and infection, the RC-DNA migrates in the nucleus, and is converted into a plasmid-like covalently closed circular DNA (cccDNA). The activity of P protein does not seem to be necessary for cccDNA generation, and is presumably released from (+)DNA by host nuclear DNA repair machinery. This chain is Protein P, found in Pongo pygmaeus (Bornean orangutan).